Reading from the N-terminus, the 168-residue chain is MPRSRINGNFIDKTFSIVANILLRIIPTTSGEREAFTYYRDGMSAQSEGNYAEALQNYYEAMRLEMDPYDRSYILYNIGLIHTSNGEHTKALEYYFRALERNPFLPQALNNMAVICHYRGEQAIRQGDSEIAEAWFDQAAEYWKQAIALTPGNYIEAQNWLKITRRFE.

TPR repeat units follow at residues 35 to 68, 72 to 105, and 120 to 153; these read AFTYYRDGMSAQSEGNYAEALQNYYEAMRLEMDP, SYILYNIGLIHTSNGEHTKALEYYFRALERNPFL, and GEQAIRQGDSEIAEAWFDQAAEYWKQAIALTPGN.

Belongs to the Ycf3 family.

It localises to the plastid. The protein resides in the chloroplast thylakoid membrane. Its function is as follows. Essential for the assembly of the photosystem I (PSI) complex. May act as a chaperone-like factor to guide the assembly of the PSI subunits. The chain is Photosystem I assembly protein Ycf3 from Pelargonium hortorum (Common geranium).